Reading from the N-terminus, the 362-residue chain is 3-ketodihydrosphingosine reductase gsl-3 (362 aa).

Leu-55 lines the NADP(+) pocket. Residues Gly-58, Ser-60, Gly-62, and Arg-83 each coordinate NADPH. Residues 58–62 (GASEG) carry the GXSXG motif. Asn-84 lines the NADP(+) pocket. Arg-87 and Asp-113 together coordinate NADPH. NADP(+) contacts are provided by Asp-113, Arg-176, Tyr-216, Lys-220, Ile-252, and Ser-254. The active-site Proton acceptor is the Tyr-216. The active-site Lowers pKa of active site Tyr is Lys-220. The helical transmembrane segment at 318–338 (NNWVLDTLMGWLIPIIYFFVL) threads the bilayer.

Belongs to the short-chain dehydrogenases/reductases (SDR) family.

Its subcellular location is the endoplasmic reticulum membrane. The enzyme catalyses sphinganine + NADP(+) = 3-oxosphinganine + NADPH + H(+). It participates in lipid metabolism; sphingolipid metabolism. Catalyzes the reduction of 3'-oxosphinganine (3-ketodihydrosphingosine/KDS) to sphinganine (dihydrosphingosine/DHS), the second step of de novo sphingolipid biosynthesis. The polypeptide is 3-ketodihydrosphingosine reductase gsl-3 (gsl-3) (Neurospora crassa (strain ATCC 24698 / 74-OR23-1A / CBS 708.71 / DSM 1257 / FGSC 987)).